The following is a 387-amino-acid chain: MLMCRRWLVCSLRCHYRSFSFSAARRTVMPAWVIDKYGKNDVLRFTKNAALPIIHYPNEVVVKVHAAGLNPIDISMRGGYGAATMAMKRDPLNISQSGGEFPLILGRDVSGEIMECGLDVKYFKPGDQVWAAIPPWKQGSLAEFVVVSGNEVSHKPKSLRHDEAASIPYVAATAWSAIVNTGGLNKDNSAKKRVLILGGSGGVGTFAIQMVKAWGAHVTVTCSQNAERLVRDLGADDVVDYTAGPVEKQLKNLEKFDLILDSIGGETEKWALDLLKPWSGAKFVTLITPFLQNTDRLGLADGMMQSAVTVGCKVVKNLRKGVHYRWGFFAPSGSALDEVSEMVDAGKVRPVVEEVFSFAQVPEAFQKVEQGHARGKTVVSIMEDQKE.

The N-terminal 27 residues, 1 to 27, are a transit peptide targeting the mitochondrion; it reads MLMCRRWLVCSLRCHYRSFSFSAARRT. Residues 38–379 enclose the Enoyl reductase (ER) domain; the sequence is GKNDVLRFTK…QGHARGKTVV (342 aa). Positions 200, 202, 203, 223, 241, 286, 327, 329, 372, 373, and 374 each coordinate NADPH.

The protein belongs to the zinc-containing alcohol dehydrogenase family. Quinone oxidoreductase subfamily.

The protein resides in the mitochondrion matrix. It localises to the mitochondrion outer membrane. The catalysed reaction is a 3-demethylubiquinone + NADH + 2 H(+) = a 3-demethylubiquinol + NAD(+). It carries out the reaction a 3-demethylubiquinone + NADPH + 2 H(+) = a 3-demethylubiquinol + NADP(+). The enzyme catalyses 3-demethylubiquinone-10 + NADH + 2 H(+) = 3-demethylubiquinol-10 + NAD(+). It catalyses the reaction 3-demethylubiquinone-10 + NADPH + 2 H(+) = 3-demethylubiquinol-10 + NADP(+). The protein operates within cofactor biosynthesis; ubiquinone biosynthesis. In terms of biological role, NAD(P)H oxidoreductase involved in the ubiquinone biosynthetic pathway. Required for the O-methyltransferase activity of COQ3. Able to catalyze the oxidoreduction of 3-demethylubiquinone into 3-demethylubiquinol in vitro. However, it is unclear if 3-demethylubiquinone constitutes a substrate in vivo. May also play a role in the regulation of retinal ganglion cell (RGC) neurite outgrowth, and hence in the development of the inner retina and optic nerve. The sequence is that of NAD(P)H oxidoreductase RTN4IP1, mitochondrial (rtn4ip1) from Danio rerio (Zebrafish).